The primary structure comprises 117 residues: Large ribosomal subunit protein bL20c (117 aa).

Belongs to the bacterial ribosomal protein bL20 family.

The protein localises to the plastid. The protein resides in the chloroplast. Its function is as follows. Binds directly to 23S ribosomal RNA and is necessary for the in vitro assembly process of the 50S ribosomal subunit. It is not involved in the protein synthesizing functions of that subunit. The sequence is that of Large ribosomal subunit protein bL20c from Phalaenopsis aphrodite subsp. formosana (Moth orchid).